The chain runs to 720 residues: Proline-rich receptor-like protein kinase PERK12 (720 aa).

A disordered region spans residues 1-240; that stretch reads MSDLGESPSS…GNGDGGGGGG (240 aa). The Extracellular segment spans residues 1–246; sequence MSDLGESPSS…GGGGGYQGKT (246 aa). The span at 10–25 shows a compositional bias: pro residues; sequence SSPPAPPADTAPPPET. Over residues 26-35 the composition is skewed to low complexity; the sequence is PSENSALPPV. Pro residues-rich tracts occupy residues 52–84 and 92–116; these read LSEP…PSDS and PSPP…PAPP. The N-linked (GlcNAc...) asparagine glycan is linked to Asn-117. Composition is skewed to pro residues over residues 123-138 and 147-207; these read NPPP…PSSP and PESP…PPKT. Residues 247-267 form a helical membrane-spanning segment; that stretch reads MVGMAVAGFAIMALIGVVFLV. Residues 268–720 are Cytoplasmic-facing; it reads RRKKKRNIDS…ETRPFNNRRF (453 aa). Positions 300-349 are disordered; sequence QDPGKGYSSGPNGSMYNNSQQQQSSMGNSYGTAGGGYPHHQMQSSGTPDS. The span at 311–330 shows a compositional bias: low complexity; that stretch reads NGSMYNNSQQQQSSMGNSYG. One can recognise a Protein kinase domain in the interval 371–624; the sequence is FARKNILGEG…EVFRMIETAA (254 aa). ATP-binding positions include 377–385 and Lys-399; that span reads LGEGGFGCV. Tyr-444 is subject to Phosphotyrosine. The Proton acceptor role is filled by Asp-495. Ser-528 carries the phosphoserine modification. A phosphothreonine mark is found at Thr-529 and Thr-534. Phosphotyrosine is present on Tyr-542. The interval 698–720 is disordered; that stretch reads SAKSSSDFSGNESETRPFNNRRF.

The protein belongs to the protein kinase superfamily. Ser/Thr protein kinase family. Mostly expressed in apical parts, including flower buds, and particularly in anthers. Also present in root hairs.

It localises to the cell membrane. It catalyses the reaction L-seryl-[protein] + ATP = O-phospho-L-seryl-[protein] + ADP + H(+). The enzyme catalyses L-threonyl-[protein] + ATP = O-phospho-L-threonyl-[protein] + ADP + H(+). Its function is as follows. Regulates the auxin-related MAX (More Axillary Growth) pathway during the shoot branching. The protein is Proline-rich receptor-like protein kinase PERK12 (PERK12) of Arabidopsis thaliana (Mouse-ear cress).